A 102-amino-acid polypeptide reads, in one-letter code: Small ribosomal subunit protein uS10 (102 aa).

This sequence belongs to the universal ribosomal protein uS10 family. As to quaternary structure, part of the 30S ribosomal subunit.

In terms of biological role, involved in the binding of tRNA to the ribosomes. The sequence is that of Small ribosomal subunit protein uS10 from Parvibaculum lavamentivorans (strain DS-1 / DSM 13023 / NCIMB 13966).